The following is a 312-amino-acid chain: tRNA dimethylallyltransferase (312 aa).

An ATP-binding site is contributed by 11-18 (GATATGKT). 13–18 (TATGKT) is a binding site for substrate. The tract at residues 36–39 (DSRQ) is interaction with substrate tRNA.

Belongs to the IPP transferase family. In terms of assembly, monomer. Mg(2+) is required as a cofactor.

It catalyses the reaction adenosine(37) in tRNA + dimethylallyl diphosphate = N(6)-dimethylallyladenosine(37) in tRNA + diphosphate. Functionally, catalyzes the transfer of a dimethylallyl group onto the adenine at position 37 in tRNAs that read codons beginning with uridine, leading to the formation of N6-(dimethylallyl)adenosine (i(6)A). In Thermosynechococcus vestitus (strain NIES-2133 / IAM M-273 / BP-1), this protein is tRNA dimethylallyltransferase.